Consider the following 70-residue polypeptide: MRGGGKKNASNVEPLRATRPCAECGRPSVREHYPFCSERCRNVDLNRWLSGSYAIPVADDESKADDEDER.

Zn(2+)-binding residues include Cys-21, Cys-24, Cys-36, and Cys-40.

This sequence belongs to the DNA gyrase inhibitor YacG family. Interacts with GyrB. The cofactor is Zn(2+).

Functionally, inhibits all the catalytic activities of DNA gyrase by preventing its interaction with DNA. Acts by binding directly to the C-terminal domain of GyrB, which probably disrupts DNA binding by the gyrase. This chain is DNA gyrase inhibitor YacG, found in Sinorhizobium medicae (strain WSM419) (Ensifer medicae).